A 193-amino-acid polypeptide reads, in one-letter code: NAD(P)H-quinone oxidoreductase subunit I (193 aa).

4Fe-4S ferredoxin-type domains lie at 55 to 84 (GRIH…VDWE) and 95 to 124 (KHYS…MTEE). [4Fe-4S] cluster is bound by residues Cys64, Cys67, Cys70, Cys74, Cys104, Cys107, Cys110, and Cys114. Residues 169-193 (LDPHDLPSGNQRSGKRPEEIIAESD) form a disordered region.

Belongs to the complex I 23 kDa subunit family. As to quaternary structure, NDH-1 is composed of at least 11 different subunits. It depends on [4Fe-4S] cluster as a cofactor.

Its subcellular location is the cellular thylakoid membrane. The enzyme catalyses a plastoquinone + NADH + (n+1) H(+)(in) = a plastoquinol + NAD(+) + n H(+)(out). It carries out the reaction a plastoquinone + NADPH + (n+1) H(+)(in) = a plastoquinol + NADP(+) + n H(+)(out). NDH-1 shuttles electrons from an unknown electron donor, via FMN and iron-sulfur (Fe-S) centers, to quinones in the respiratory and/or the photosynthetic chain. The immediate electron acceptor for the enzyme in this species is believed to be plastoquinone. Couples the redox reaction to proton translocation, and thus conserves the redox energy in a proton gradient. The protein is NAD(P)H-quinone oxidoreductase subunit I of Rippkaea orientalis (strain PCC 8801 / RF-1) (Cyanothece sp. (strain PCC 8801)).